A 140-amino-acid chain; its full sequence is Class I hydrophobin 1 (140 aa).

Positions 1–18 (MKFAAVVVLAAAAAAVSA) are cleaved as a signal peptide. The interval 22 to 60 (AQRMARGLPPKAPIRRHGTPADTEKRSHPSSTGGGQCNT) is disordered. 4 disulfide bridges follow: Cys58–Cys119, Cys65–Cys113, Cys66–Cys99, and Cys120–Cys133.

This sequence belongs to the fungal hydrophobin family. As to quaternary structure, self-assembles to form functional amyloid fibrils called rodlets. Self-assembly into fibrillar rodlets occurs spontaneously at hydrophobic:hydrophilic interfaces and the rodlets further associate laterally to form amphipathic monolayers.

It localises to the secreted. The protein resides in the cell wall. Functionally, aerial growth, conidiation, and dispersal of filamentous fungi in the environment rely upon a capability of their secreting small amphipathic proteins called hydrophobins (HPBs) with low sequence identity. Class I can self-assemble into an outermost layer of rodlet bundles on aerial cell surfaces, conferring cellular hydrophobicity that supports fungal growth, development and dispersal; whereas Class II form highly ordered films at water-air interfaces through intermolecular interactions but contribute nothing to the rodlet structure. In Pisolithus tinctorius (Dead man's foot), this protein is Class I hydrophobin 1.